We begin with the raw amino-acid sequence, 2155 residues long: Polyketide synthase 2 (2155 aa).

The N-terminal acylcarrier protein transacylase domain (SAT) stretch occupies residues 7–244 (FIFGDQTGGF…IPIPIWAPYH (238 aa)). Residues 374–807 (DSKIAIIGMS…GGNSALLLED (434 aa)) enclose the Ketosynthase family 3 (KS3) domain. Active-site for beta-ketoacyl synthase activity residues include Cys546, His681, and His723. Residues 908-1213 (GFVFSGQGAQ…ASLHRKDDGW (306 aa)) are malonyl-CoA:ACP transacylase (MAT) domain. The For acyl/malonyl transferase activity role is filled by Ser998. Residues 1290-1605 (TSSVQRIIRQ…RSLLNKVLPP (316 aa)) form a product template (PT) domain region. The tract at residues 1294–1428 (QRIIRQTDGP…CLLRFADPTS (135 aa)) is N-terminal hotdog fold. Residues 1294–1600 (QRIIRQTDGP…FLGMSRSLLN (307 aa)) enclose the PKS/mFAS DH domain. His1327 functions as the Proton acceptor; for dehydratase activity in the catalytic mechanism. A C-terminal hotdog fold region spans residues 1455-1600 (TDSLLSKGIV…FLGMSRSLLN (146 aa)). Asp1514 functions as the Proton donor; for dehydratase activity in the catalytic mechanism. Positions 1626-1654 (AASAKDTERRPLDIPTRAQRQPSSPQTGT) are disordered. The span at 1643–1654 (AQRQPSSPQTGT) shows a compositional bias: polar residues. Residues 1649-1726 (SPQTGTMGRI…ELKAFLGADQ (78 aa)) enclose the Carrier 1 domain. Ser1686 carries the post-translational modification O-(pantetheine 4'-phosphoryl)serine. Residues 1735–1765 (SSIGQHTPQTSDKGSGTLASQKTDGDTGPDT) form a disordered region. Over residues 1736-1756 (SIGQHTPQTSDKGSGTLASQK) the composition is skewed to polar residues. The Carrier 2 domain maps to 1764–1838 (DTTLNRVCAI…ALQKALCGSE (75 aa)). Residue Ser1798 is modified to O-(pantetheine 4'-phosphoryl)serine. The interval 1873-2149 (ASPPHATSIL…MVEMGNLIGD (277 aa)) is thioesterase (TE) domain. Ser1979 functions as the For thioesterase activity in the catalytic mechanism.

Functionally, polyketide synthase; part of the Pks2 gene cluster that mediates the formation of infectious structures (appressoria), enabling these fungi to kill insects faster. The product of the Pks2 gene cluster is different from the one of Pks1 and has still not been identified. This chain is Polyketide synthase 2, found in Metarhizium anisopliae (strain ARSEF 549).